The primary structure comprises 376 residues: Arsenite methyltransferase (376 aa).

Phosphoserine is present on residues serine 47 and serine 336. The segment covering 354-363 has biased composition (basic and acidic residues); sequence SDKMKPRHAP. Residues 354–376 are disordered; the sequence is SDKMKPRHAPEGTGGCCGKRKNC.

It belongs to the methyltransferase superfamily. Arsenite methyltransferase family.

Its subcellular location is the cytoplasm. It is found in the cytosol. The catalysed reaction is arsenic triglutathione + [thioredoxin]-dithiol + S-adenosyl-L-methionine + 2 H2O = methylarsonous acid + [thioredoxin]-disulfide + 3 glutathione + S-adenosyl-L-homocysteine + H(+). It catalyses the reaction arsenic triglutathione + 2 [thioredoxin]-dithiol + 2 S-adenosyl-L-methionine + H2O = dimethylarsinous acid + 2 [thioredoxin]-disulfide + 3 glutathione + 2 S-adenosyl-L-homocysteine + 2 H(+). It carries out the reaction arsenic triglutathione + 3 [thioredoxin]-dithiol + 3 S-adenosyl-L-methionine = trimethylarsine + 3 [thioredoxin]-disulfide + 3 glutathione + 3 S-adenosyl-L-homocysteine + 3 H(+). Functionally, catalyzes the transfer of a methyl group from AdoMet to trivalent arsenicals producing methylated and dimethylated arsenicals. It methylates arsenite to form methylarsonate, Me-AsO(3)H(2), which is reduced by methylarsonate reductase to methylarsonite, Me-As(OH)2. Methylarsonite is also a substrate and it is converted into the much less toxic compound dimethylarsinate (cacodylate), Me(2)As(O)-OH. The chain is Arsenite methyltransferase (As3mt) from Mus musculus (Mouse).